The primary structure comprises 105 residues: Nitrogenase-stabilizing/protective protein NifW 1 (105 aa).

Belongs to the NifW family. Homotrimer; associates with NifD.

May protect the nitrogenase Fe-Mo protein from oxidative damage. The protein is Nitrogenase-stabilizing/protective protein NifW 1 of Trichormus variabilis (strain ATCC 29413 / PCC 7937) (Anabaena variabilis).